A 174-amino-acid chain; its full sequence is Ferredoxin-2, mitochondrial (174 aa).

The transit peptide at 1 to 43 directs the protein to the mitochondrion; the sequence is MAASMARGVSARVLLRAAGGSWGPRAGHAAVTSRTFGTTGERR. Residues 26–52 are disordered; it reads AGHAAVTSRTFGTTGERRAGEEAADSP. In terms of domain architecture, 2Fe-2S ferredoxin-type spans 59-161; the sequence is VNVVFVDRSG…GVEFALPKIT (103 aa). Positions 96, 102, 105, and 142 each coordinate [2Fe-2S] cluster.

The protein belongs to the adrenodoxin/putidaredoxin family. Component of the mitochondrial core iron-sulfur cluster (ISC) complex composed of NFS1, LYRM4, NDUFAB1, ISCU, FXN, and FDX2; this complex is a heterohexamer containing two copies of each monomer. Form a heterodimer complex with NFS1. Interacts (in both their reduced and oxidized states) with the cysteine desulfurase (NFS1:LYRM4) complex; this interaction stimulates cysteine desulfurase activity, and serves as a reductant for Fe-S cluster assembly. [2Fe-2S] cluster serves as cofactor.

The protein localises to the mitochondrion. It is found in the mitochondrion matrix. Electron donor, of the core iron-sulfur cluster (ISC) assembly complex, that acts to reduce the persulfide into sulfide during [2Fe-2S] clusters assembly on the scaffolding protein ISCU. The core iron-sulfur cluster (ISC) assembly complex is involved in the de novo synthesis of a [2Fe-2S] cluster, the first step of the mitochondrial iron-sulfur protein biogenesis. This process is initiated by the cysteine desulfurase complex (NFS1:LYRM4:NDUFAB1) that produces persulfide which is delivered on the scaffold protein ISCU in a FXN-dependent manner. Then this complex is stabilized by FDX2 which provides reducing equivalents to accomplish the [2Fe-2S] cluster assembly. Finally, the [2Fe-2S] cluster is transferred from ISCU to chaperone proteins, including HSCB, HSPA9 and GLRX5. Essential for coenzyme Q biosynthesis: together with FDXR, transfers the electrons required for the hydroxylation reaction performed by COQ6. The sequence is that of Ferredoxin-2, mitochondrial from Mus musculus (Mouse).